The primary structure comprises 124 residues: Small ribosomal subunit protein bS6 (124 aa).

Residues 100–124 (KERRAARQKTGETQENVSQEESSTN) form a disordered region. A compositionally biased stretch (polar residues) spans 110–124 (GETQENVSQEESSTN).

It belongs to the bacterial ribosomal protein bS6 family.

Functionally, binds together with bS18 to 16S ribosomal RNA. The polypeptide is Small ribosomal subunit protein bS6 (Fervidobacterium nodosum (strain ATCC 35602 / DSM 5306 / Rt17-B1)).